Consider the following 307-residue polypeptide: Dihydroorotate dehydrogenase A (fumarate) (307 aa).

FMN-binding positions include Ser21 and 46 to 47 (KT). Substrate contacts are provided by residues Lys46, 70-74 (NSVGL), and Asn130. Residue Asn130 participates in FMN binding. The Nucleophile role is filled by Cys133. Positions 168 and 194 each coordinate FMN. 195 to 196 (NT) contacts substrate. FMN is bound by residues Gly220, 246–247 (GG), and 268–269 (GS).

The protein belongs to the dihydroorotate dehydrogenase family. Type 1 subfamily. In terms of assembly, homodimer. The cofactor is FMN.

The protein resides in the cytoplasm. It carries out the reaction (S)-dihydroorotate + fumarate = orotate + succinate. The protein operates within pyrimidine metabolism; UMP biosynthesis via de novo pathway. Catalyzes the conversion of dihydroorotate to orotate with fumarate as the electron acceptor. The protein is Dihydroorotate dehydrogenase A (fumarate) (pyrD) of Lactobacillus delbrueckii subsp. bulgaricus (strain ATCC 11842 / DSM 20081 / BCRC 10696 / JCM 1002 / NBRC 13953 / NCIMB 11778 / NCTC 12712 / WDCM 00102 / Lb 14).